We begin with the raw amino-acid sequence, 497 residues long: MCVFQILIIVTTIKVAGTANINHIDVPAGHSATTTIPRYPPVVDGTLYTETWTWIPNHCNETATGYVCLESAHCFTDLILGVSCMRYADEIVLRTDKFIVDAGSIKQIESLSLNGVPNIFLSTKASNKLEILNASLQNAGIYIRYSRNGTRTAKLDVVVVGVLGQARDRLPQMSSPMISSHADIKLSLKNFKALVYHVGDTINVSTAVILGPSPEIFTLEFRVLFLRYNPTCKFVTIYEPCIFHPKEPECITTAEQSVCHFASNIDILQIAAARSENCSTGYRRCIYDTAIDESVQARLTFIEPGIPSFKMKDVQVDDAGLYVVVALYNGRPSAWTYIYLSTVETYLNVYENYHKPGFGYKSFLQNSSIVDENEASDWSSSSIKRRNNGTIIYDILLTSLSIGAIIIVIVGGVCIAILIRRRRRRRTRGLFDEYPKYMTLPGNDLGGMNVPYDNTCSGNQVEYYQEKSAKMKRMGSGYTAWLKNDMPKIRKRLDLYH.

Residues 1 to 398 (MCVFQILIIV…GTIIYDILLT (398 aa)) lie on the Virion surface side of the membrane. N-linked (GlcNAc...) asparagine; by host glycosylation is found at Asn60, Asn133, Asn148, Asn203, Asn277, Asn366, and Asn388. Residues 399 to 419 (SLSIGAIIIVIVGGVCIAILI) traverse the membrane as a helical segment. Residues 420–497 (RRRRRRRTRG…KIRKRLDLYH (78 aa)) lie on the Intravirion side of the membrane.

This sequence belongs to the alphaherpesvirinae glycoprotein E family. As to quaternary structure, interacts with gI. In terms of processing, phosphorylated within the acidic cluster. Phosphorylation determines whether endocytosed viral gE traffics to the trans-Golgi network or recycles to the cell membrane.

It localises to the virion membrane. It is found in the host cell membrane. The protein resides in the host cell junction. The protein localises to the host Golgi apparatus membrane. Its subcellular location is the host endosome membrane. Functionally, in epithelial cells, the heterodimer gE/gI is required for the cell-to-cell spread of the virus, by sorting nascent virions to cell junctions. Once the virus reaches the cell junctions, virus particles can spread to adjacent cells extremely rapidly through interactions with cellular receptors that accumulate at these junctions. Implicated in basolateral spread in polarized cells. In neuronal cells, gE/gI is essential for the anterograde spread of the infection throughout the host nervous system. Together with US9, the heterodimer gE/gI is involved in the sorting and transport of viral structural components toward axon tips. This Gallus gallus (Chicken) protein is Envelope glycoprotein E (MDV096).